Reading from the N-terminus, the 226-residue chain is Deoxyribose-phosphate aldolase (226 aa).

Asp-93 functions as the Proton donor/acceptor in the catalytic mechanism. The active-site Schiff-base intermediate with acetaldehyde is the Lys-159. Lys-189 acts as the Proton donor/acceptor in catalysis.

Belongs to the DeoC/FbaB aldolase family. DeoC type 1 subfamily.

The protein localises to the cytoplasm. It catalyses the reaction 2-deoxy-D-ribose 5-phosphate = D-glyceraldehyde 3-phosphate + acetaldehyde. It participates in carbohydrate degradation; 2-deoxy-D-ribose 1-phosphate degradation; D-glyceraldehyde 3-phosphate and acetaldehyde from 2-deoxy-alpha-D-ribose 1-phosphate: step 2/2. In terms of biological role, catalyzes a reversible aldol reaction between acetaldehyde and D-glyceraldehyde 3-phosphate to generate 2-deoxy-D-ribose 5-phosphate. The chain is Deoxyribose-phosphate aldolase from Mycobacterium marinum (strain ATCC BAA-535 / M).